Here is a 311-residue protein sequence, read N- to C-terminus: Pyrimidine-specific ribonucleoside hydrolase RihA (311 aa).

Residue histidine 240 is part of the active site.

This sequence belongs to the IUNH family. RihA subfamily.

Its function is as follows. Hydrolyzes with equal efficiency cytidine or uridine to ribose and cytosine or uracil, respectively. This Escherichia fergusonii (strain ATCC 35469 / DSM 13698 / CCUG 18766 / IAM 14443 / JCM 21226 / LMG 7866 / NBRC 102419 / NCTC 12128 / CDC 0568-73) protein is Pyrimidine-specific ribonucleoside hydrolase RihA.